A 513-amino-acid polypeptide reads, in one-letter code: Microcin J25-processing protein McjC (513 aa).

An Asparagine synthetase domain is found at 176–436 (STIDSIIDNI…FGSDIFWKKT (261 aa)).

It localises to the cytoplasm. Along with McjB, necessary and sufficient to process the inactive microcin J25 (McjA) precursor into the active peptide. May be involved in the formation of the amide bond between Gly-38 and Glu-53 of McjA. In Escherichia coli, this protein is Microcin J25-processing protein McjC (mcjC).